We begin with the raw amino-acid sequence, 378 residues long: GTP 3',8-cyclase 3 (378 aa).

Positions 40-259 (RCGRTMGDLR…STLGKKYGPI (220 aa)) constitute a Radical SAM core domain. R49 is a GTP binding site. 2 residues coordinate [4Fe-4S] cluster: C56 and C60. S-adenosyl-L-methionine is bound at residue Y62. C63 serves as a coordination point for [4Fe-4S] cluster. R99 contributes to the GTP binding site. G103 is a binding site for S-adenosyl-L-methionine. T134 contributes to the GTP binding site. An S-adenosyl-L-methionine-binding site is contributed by S158. K195 contacts GTP. M229 contributes to the S-adenosyl-L-methionine binding site. Residues C292 and C295 each coordinate [4Fe-4S] cluster. 297–299 (RSR) contributes to the GTP binding site. Residue C309 coordinates [4Fe-4S] cluster.

This sequence belongs to the radical SAM superfamily. MoaA family. Monomer and homodimer. The cofactor is [4Fe-4S] cluster.

The enzyme catalyses GTP + AH2 + S-adenosyl-L-methionine = (8S)-3',8-cyclo-7,8-dihydroguanosine 5'-triphosphate + 5'-deoxyadenosine + L-methionine + A + H(+). It functions in the pathway cofactor biosynthesis; molybdopterin biosynthesis. Catalyzes the cyclization of GTP to (8S)-3',8-cyclo-7,8-dihydroguanosine 5'-triphosphate. The sequence is that of GTP 3',8-cyclase 3 from Mycobacterium bovis (strain ATCC BAA-935 / AF2122/97).